We begin with the raw amino-acid sequence, 98 residues long: NADH-ubiquinone oxidoreductase chain 4L (98 aa).

3 consecutive transmembrane segments (helical) span residues 1 to 21, 30 to 50, and 61 to 81; these read MSLV…GLLM, LLCL…TILT, and IVLL…LVMV.

It belongs to the complex I subunit 4L family. Core subunit of respiratory chain NADH dehydrogenase (Complex I) which is composed of 45 different subunits.

It localises to the mitochondrion inner membrane. The catalysed reaction is a ubiquinone + NADH + 5 H(+)(in) = a ubiquinol + NAD(+) + 4 H(+)(out). Functionally, core subunit of the mitochondrial membrane respiratory chain NADH dehydrogenase (Complex I) which catalyzes electron transfer from NADH through the respiratory chain, using ubiquinone as an electron acceptor. Part of the enzyme membrane arm which is embedded in the lipid bilayer and involved in proton translocation. In Crocidura russula (Greater white-toothed shrew), this protein is NADH-ubiquinone oxidoreductase chain 4L (MT-ND4L).